Consider the following 58-residue polypeptide: Small integral membrane protein 11 (58 aa).

The helical transmembrane segment at 9–29 (FPLLLYILAAKTLILCLAFAG) threads the bilayer. Residues 29-58 (GVKVYQRKRLEAKQQKVEAEKRKQAEKKES) adopt a coiled-coil conformation.

It is found in the membrane. The sequence is that of Small integral membrane protein 11 (SMIM11) from Bos taurus (Bovine).